The primary structure comprises 451 residues: NADH-quinone oxidoreductase subunit D (451 aa).

Belongs to the complex I 49 kDa subunit family. In terms of assembly, NDH-1 is composed of 14 different subunits. Subunits NuoB, C, D, E, F, and G constitute the peripheral sector of the complex.

The protein localises to the cell inner membrane. The catalysed reaction is a quinone + NADH + 5 H(+)(in) = a quinol + NAD(+) + 4 H(+)(out). NDH-1 shuttles electrons from NADH, via FMN and iron-sulfur (Fe-S) centers, to quinones in the respiratory chain. The immediate electron acceptor for the enzyme in this species is believed to be a menaquinone. Couples the redox reaction to proton translocation (for every two electrons transferred, four hydrogen ions are translocated across the cytoplasmic membrane), and thus conserves the redox energy in a proton gradient. The protein is NADH-quinone oxidoreductase subunit D of Salinibacter ruber (strain DSM 13855 / M31).